Here is a 376-residue protein sequence, read N- to C-terminus: Chaperone protein DnaJ (376 aa).

A J domain is found at 5-69 (DYYEVLGISK…QKRAQYDQYG (65 aa)). The CR-type zinc-finger motif lies at 133 to 215 (GKDAEIEIPR…CHGKGRVTKT (83 aa)). 8 residues coordinate Zn(2+): cysteine 146, cysteine 149, cysteine 163, cysteine 166, cysteine 189, cysteine 192, cysteine 203, and cysteine 206. CXXCXGXG motif repeat units follow at residues 146–153 (CDTCHGSG), 163–170 (CSHCGGKG), 189–196 (CQYCNGTG), and 203–210 (CSTCHGKG).

Belongs to the DnaJ family. In terms of assembly, homodimer. Zn(2+) is required as a cofactor.

The protein resides in the cytoplasm. Its function is as follows. Participates actively in the response to hyperosmotic and heat shock by preventing the aggregation of stress-denatured proteins and by disaggregating proteins, also in an autonomous, DnaK-independent fashion. Unfolded proteins bind initially to DnaJ; upon interaction with the DnaJ-bound protein, DnaK hydrolyzes its bound ATP, resulting in the formation of a stable complex. GrpE releases ADP from DnaK; ATP binding to DnaK triggers the release of the substrate protein, thus completing the reaction cycle. Several rounds of ATP-dependent interactions between DnaJ, DnaK and GrpE are required for fully efficient folding. Also involved, together with DnaK and GrpE, in the DNA replication of plasmids through activation of initiation proteins. In Listeria welshimeri serovar 6b (strain ATCC 35897 / DSM 20650 / CCUG 15529 / CIP 8149 / NCTC 11857 / SLCC 5334 / V8), this protein is Chaperone protein DnaJ.